Here is a 264-residue protein sequence, read N- to C-terminus: Phosphonoacetaldehyde hydrolase (264 aa).

D9 acts as the Nucleophile in catalysis. 2 residues coordinate Mg(2+): D9 and A11. Catalysis depends on K50, which acts as the Schiff-base intermediate with substrate. Position 183 (D183) interacts with Mg(2+).

Belongs to the HAD-like hydrolase superfamily. PhnX family. Homodimer. It depends on Mg(2+) as a cofactor.

It carries out the reaction phosphonoacetaldehyde + H2O = acetaldehyde + phosphate + H(+). Its function is as follows. Involved in phosphonate degradation. The polypeptide is Phosphonoacetaldehyde hydrolase (Bacillus anthracis).